A 183-amino-acid chain; its full sequence is Protein GrpE (183 aa).

The span at 1 to 14 shows a compositional bias: basic and acidic residues; sequence MSNEENKINEEALK. Residues 1–20 form a disordered region; it reads MSNEENKINEEALKQQDAAE.

The protein belongs to the GrpE family. In terms of assembly, homodimer.

The protein resides in the cytoplasm. In terms of biological role, participates actively in the response to hyperosmotic and heat shock by preventing the aggregation of stress-denatured proteins, in association with DnaK and GrpE. It is the nucleotide exchange factor for DnaK and may function as a thermosensor. Unfolded proteins bind initially to DnaJ; upon interaction with the DnaJ-bound protein, DnaK hydrolyzes its bound ATP, resulting in the formation of a stable complex. GrpE releases ADP from DnaK; ATP binding to DnaK triggers the release of the substrate protein, thus completing the reaction cycle. Several rounds of ATP-dependent interactions between DnaJ, DnaK and GrpE are required for fully efficient folding. The sequence is that of Protein GrpE from Vibrio vulnificus (strain CMCP6).